A 1049-amino-acid chain; its full sequence is MDWSFFRVVAMLFIFLVVVEVNSEFRIQVRDYNTKNGTIKWHSIRRQKREWIKFAAACREGEDNSKRNPIAKIHSDCAANQQVTYRISGVGIDQPPYGIFVINQKTGEINITSIVDREVTPFFIIYCRALNSMGQDLERPLELRVRVLDINDNPPVFSMATFAGQIEENSNANTLVMILNATDADEPNNLNSKIAFKIIRQEPSDSPMFIINRNTGEIRTMNNFLDREQYGQYALAVRGSDRDGGADGMSAECECNIKILDVNDNIPYMEQSSYTIEIQENTLNSNLLEIRVIDLDEEFSANWMAVIFFISGNEGNWFEIEMNERTNVGILKVVKPLDYEAMQSLQLSIGVRNKAEFHHSIMSQYKLKASAISVTVLNVIEGPVFRPGSKTYVVTGNMGSNDKVGDFVATDLDTGRPSTTVRYVMGNNPADLLAVDSRTGKLTLKNKVTKEQYNMLGGKYQGTILSIDDNLQRTCTGTININIQSFGNDDRTNTEPNTKITTNTGRQESTSSTNYDTSTTSTDSSQVYSSEPGNGAKDLLSDNVHFGPAGIGLLIMGFLVLGLVPFLMICCDCGGAPRSAAGFEPVPECSDGAIHSWAVEGPQPEPRDITTVIPQIPPDNANIIECIDNSGVYTNEYGGREMQDLGGGERMTGFELTEGVKTSGMPEICQEYSGTLRRNSMRECREGGLNMNFMESYFCQKAYAYADEDEGRPSNDCLLIYDIEGVGSPAGSVGCCSFIGEDLDDSFLDTLGPKFKKLADISLGKESYPDLDPSWPPQSTEPVCLPQETEPVVSGHPPISPHFGTTTVISESTYPSGPGVLHPKPILDPLGYGNVTVTESYTTSDTLKPSVHVHDNRPASNVVVTERVVGPISGADLHGMLEMPDLRDGSNVIVTERVIAPSSSLPTSLTIHHPRESSNVVVTERVIQPTSGMIGSLSMHPELANAHNVIVTERVVSGAGVTGISGTTGISGGIGSSGLVGTSMGAGSGALSGAGISGGGIGLSSLGGTASIGHMRSSSDHHFNQTIGSASPSTARSRITKYSTVQYSK.

Residues 1–23 form the signal peptide; the sequence is MDWSFFRVVAMLFIFLVVVEVNS. Positions 24 to 49 are excised as a propeptide; that stretch reads EFRIQVRDYNTKNGTIKWHSIRRQKR. N-linked (GlcNAc...) asparagine glycosylation is found at Asn36, Asn110, and Asn180. Cadherin domains are found at residues 50 to 158, 159 to 270, 271 to 385, and 386 to 497; these read EWIK…PVFS, MATF…PYME, QSSY…GPVF, and RPGS…TEPN. Residues 50 to 548 are Extracellular-facing; that stretch reads EWIKFAAACR…LLSDNVHFGP (499 aa). Residues 485 to 534 form a disordered region; that stretch reads SFGNDDRTNTEPNTKITTNTGRQESTSSTNYDTSTTSTDSSQVYSSEPGN. Polar residues predominate over residues 494-508; sequence TEPNTKITTNTGRQE. A compositionally biased stretch (low complexity) spans 509–530; sequence STSSTNYDTSTTSTDSSQVYSS. Residues 549–569 form a helical membrane-spanning segment; sequence AGIGLLIMGFLVLGLVPFLMI. Residues 570-1049 are Cytoplasmic-facing; it reads CCDCGGAPRS…TKYSTVQYSK (480 aa). Ser579 carries the post-translational modification Phosphoserine. Desmoglein repeat repeat units follow at residues 813-839, 840-869, 870-899, 900-927, and 928-956; these read TYPS…TVTE, SYTT…ERVV, GPIS…ERVI, APSS…ERVI, and QPTS…ERVV. Residues 1014–1035 are disordered; sequence HMRSSSDHHFNQTIGSASPSTA. Residues 1024 to 1035 are compositionally biased toward polar residues; that stretch reads NQTIGSASPSTA.

In terms of assembly, binds to JUP/plakoglobin. Interacts with PKP2. Interacts with DSC3; there is evidence to suggest that the interaction promotes cell-cell adhesion of keratinocytes. (Microbial infection) Interacts with Staphylococcus aureus protein SdrD; this interaction increases S.aureus adherence to keratinocytes. In terms of tissue distribution, expressed in all suprabasal layers of the epidermis, with the highest expression seen in the granular layer (at protein level).

The protein resides in the cell membrane. Its subcellular location is the cell junction. It is found in the desmosome. The protein localises to the cytoplasm. It localises to the nucleus. Component of intercellular desmosome junctions. Involved in the interaction of plaque proteins and intermediate filaments mediating cell-cell adhesion. The protein is Desmoglein-1 (DSG1) of Homo sapiens (Human).